The chain runs to 541 residues: 2-succinyl-5-enolpyruvyl-6-hydroxy-3-cyclohexene-1-carboxylate synthase (541 aa).

Belongs to the TPP enzyme family. MenD subfamily. As to quaternary structure, homodimer. Mg(2+) is required as a cofactor. Mn(2+) serves as cofactor. It depends on thiamine diphosphate as a cofactor.

It carries out the reaction isochorismate + 2-oxoglutarate + H(+) = 5-enolpyruvoyl-6-hydroxy-2-succinyl-cyclohex-3-ene-1-carboxylate + CO2. It participates in quinol/quinone metabolism; 1,4-dihydroxy-2-naphthoate biosynthesis; 1,4-dihydroxy-2-naphthoate from chorismate: step 2/7. It functions in the pathway quinol/quinone metabolism; menaquinone biosynthesis. Catalyzes the thiamine diphosphate-dependent decarboxylation of 2-oxoglutarate and the subsequent addition of the resulting succinic semialdehyde-thiamine pyrophosphate anion to isochorismate to yield 2-succinyl-5-enolpyruvyl-6-hydroxy-3-cyclohexene-1-carboxylate (SEPHCHC). The polypeptide is 2-succinyl-5-enolpyruvyl-6-hydroxy-3-cyclohexene-1-carboxylate synthase (Leuconostoc mesenteroides subsp. mesenteroides (strain ATCC 8293 / DSM 20343 / BCRC 11652 / CCM 1803 / JCM 6124 / NCDO 523 / NBRC 100496 / NCIMB 8023 / NCTC 12954 / NRRL B-1118 / 37Y)).